Consider the following 448-residue polypeptide: tRNA modification GTPase MnmE (448 aa).

Residues R21, E80, and K119 each coordinate (6S)-5-formyl-5,6,7,8-tetrahydrofolate. In terms of domain architecture, TrmE-type G spans G215–G370. Residue N225 participates in K(+) binding. Residues N225–S230, T244–T250, and D269–G272 contribute to the GTP site. S229 serves as a coordination point for Mg(2+). 3 residues coordinate K(+): T244, I246, and T249. T250 is a binding site for Mg(2+). Position 448 (K448) interacts with (6S)-5-formyl-5,6,7,8-tetrahydrofolate.

This sequence belongs to the TRAFAC class TrmE-Era-EngA-EngB-Septin-like GTPase superfamily. TrmE GTPase family. Homodimer. Heterotetramer of two MnmE and two MnmG subunits. K(+) serves as cofactor.

It localises to the cytoplasm. Its function is as follows. Exhibits a very high intrinsic GTPase hydrolysis rate. Involved in the addition of a carboxymethylaminomethyl (cmnm) group at the wobble position (U34) of certain tRNAs, forming tRNA-cmnm(5)s(2)U34. This Aquifex aeolicus (strain VF5) protein is tRNA modification GTPase MnmE.